Consider the following 204-residue polypeptide: Prephenate decarboxylase (204 aa).

Belongs to the prephenate decarboxylase family.

It localises to the cytoplasm. The enzyme catalyses prephenate + H(+) = 3-[(4R)-4-hydroxycyclohexa-1,5-dien-1-yl]-2-oxopropanoate + CO2. The protein operates within antibiotic biosynthesis; bacilysin biosynthesis. Functionally, part of the bacABCDEF operon responsible for the biosynthesis of the nonribosomally synthesized dipeptide antibiotic bacilysin, composed of L-alanine and L-anticapsin. Bacilysin is an irreversible inactivator of the glutaminase domain of glucosamine synthetase. BacA is an unusual prephenate decarboxylase that avoids the typical aromatization of the cyclohexadienol ring of prephenate. BacA catalyzes the protonation of prephenate (1-carboxy-4-hydroxy-alpha-oxo-2,5-cyclohexadiene-1-propanoic acid) at C6 position, followed by a decarboxylation to produce the endocyclic-delta(4),delta(8)-7R-dihydro-hydroxyphenylpyruvate (en-H2HPP). En-H2HPP is able to undergo a slow nonenzymatic isomerization to produce the exocyclic-delta(3),delta(5)-dihydro-hydroxyphenylpyruvate (ex-H2HPP). BacA isomerizes only the pro-R double bond in prephenate. This is Prephenate decarboxylase from Bacillus amyloliquefaciens (Bacillus velezensis).